Consider the following 191-residue polypeptide: MKYIQTEQQIEIPEGVTVSIKSRIVKVVGPRGTLTKNLKHIDVTFTKVNNQLIKVAVHNGDRKHVAALRTVKSLVDNMITGVTKGYKYKMRYVYAHFPINVNIVEKDGAKFIEVRNFLGDKKIRNVPVRDGVTIEFSTNVKDEIVLSGNSVEDVSQNAADLQQICRVRNKDIRKFLDGIYVSHKGFIVEDM.

It belongs to the universal ribosomal protein uL6 family. As to quaternary structure, component of the large ribosomal subunit (LSU). Mature yeast ribosomes consist of a small (40S) and a large (60S) subunit. The 40S small subunit contains 1 molecule of ribosomal RNA (18S rRNA) and 33 different proteins (encoded by 57 genes). The large 60S subunit contains 3 rRNA molecules (25S, 5.8S and 5S rRNA) and 46 different proteins (encoded by 81 genes).

It is found in the cytoplasm. Its function is as follows. Component of the ribosome, a large ribonucleoprotein complex responsible for the synthesis of proteins in the cell. The small ribosomal subunit (SSU) binds messenger RNAs (mRNAs) and translates the encoded message by selecting cognate aminoacyl-transfer RNA (tRNA) molecules. The large subunit (LSU) contains the ribosomal catalytic site termed the peptidyl transferase center (PTC), which catalyzes the formation of peptide bonds, thereby polymerizing the amino acids delivered by tRNAs into a polypeptide chain. The nascent polypeptides leave the ribosome through a tunnel in the LSU and interact with protein factors that function in enzymatic processing, targeting, and the membrane insertion of nascent chains at the exit of the ribosomal tunnel. This chain is Large ribosomal subunit protein uL6B, found in Saccharomyces cerevisiae (strain ATCC 204508 / S288c) (Baker's yeast).